We begin with the raw amino-acid sequence, 615 residues long: Chaperone protein HscA homolog (615 aa).

It belongs to the heat shock protein 70 family.

In terms of biological role, chaperone involved in the maturation of iron-sulfur cluster-containing proteins. Has a low intrinsic ATPase activity which is markedly stimulated by HscB. The chain is Chaperone protein HscA homolog from Aeromonas hydrophila subsp. hydrophila (strain ATCC 7966 / DSM 30187 / BCRC 13018 / CCUG 14551 / JCM 1027 / KCTC 2358 / NCIMB 9240 / NCTC 8049).